The chain runs to 170 residues: Phosphopantetheine adenylyltransferase (170 aa).

Residue Ser-14 coordinates substrate. ATP is bound by residues 14–15 (SF) and His-22. The substrate site is built by Lys-46, Leu-79, and Arg-93. ATP is bound by residues 94 to 96 (GIR), Glu-104, and 129 to 135 (IAEVSST).

The protein belongs to the bacterial CoaD family. Homohexamer. Mg(2+) serves as cofactor.

The protein localises to the cytoplasm. The enzyme catalyses (R)-4'-phosphopantetheine + ATP + H(+) = 3'-dephospho-CoA + diphosphate. It functions in the pathway cofactor biosynthesis; coenzyme A biosynthesis; CoA from (R)-pantothenate: step 4/5. Its function is as follows. Reversibly transfers an adenylyl group from ATP to 4'-phosphopantetheine, yielding dephospho-CoA (dPCoA) and pyrophosphate. The chain is Phosphopantetheine adenylyltransferase from Neisseria meningitidis serogroup C (strain 053442).